A 399-amino-acid polypeptide reads, in one-letter code: Elongation factor Tu (399 aa).

Residues 10 to 204 (KPHVNIGTIG…AVDANIPEPV (195 aa)) enclose the tr-type G domain. The tract at residues 19–26 (GHVDHGKT) is G1. 19–26 (GHVDHGKT) is a GTP binding site. Thr26 contributes to the Mg(2+) binding site. The tract at residues 60 to 64 (GITIN) is G2. The G3 stretch occupies residues 81-84 (DCPG). GTP-binding positions include 81–85 (DCPGH) and 136–139 (NKCD). The G4 stretch occupies residues 136-139 (NKCD). The interval 174-176 (SGL) is G5.

It belongs to the TRAFAC class translation factor GTPase superfamily. Classic translation factor GTPase family. EF-Tu/EF-1A subfamily. Monomer.

It is found in the cytoplasm. It carries out the reaction GTP + H2O = GDP + phosphate + H(+). GTP hydrolase that promotes the GTP-dependent binding of aminoacyl-tRNA to the A-site of ribosomes during protein biosynthesis. This chain is Elongation factor Tu, found in Synechococcus sp. (strain RCC307).